The sequence spans 403 residues: High affinity transport system protein p37 (403 aa).

Positions 1–23 (MLKKLKNFILFSSIFSPIAFAIS) are cleaved as a signal peptide. C24 carries the N-palmitoyl cysteine lipid modification. C24 is lipidated: S-diacylglycerol cysteine.

It is found in the cell membrane. Its function is as follows. P37 is part of a high-affinity transport system. The polypeptide is High affinity transport system protein p37 (p37) (Mesomycoplasma hyorhinis (Mycoplasma hyorhinis)).